Consider the following 1369-residue polypeptide: Rho guanine nucleotide exchange factor 10 (1369 aa).

Residues 1–106 are disordered; the sequence is MRPPGFLSRA…ETTPVAEPTK (106 aa). A compositionally biased stretch (acidic residues) spans 46–64; that stretch reads NNEEEEGEQFDFDSGDEIP. The span at 83–100 shows a compositional bias: low complexity; that stretch reads EAPAPTGGEDGAGAETTP. Ser180 carries the post-translational modification Phosphoserine. A disordered region spans residues 184 to 254; sequence EAETPEVTED…ENSDSEPDEM (71 aa). Positions 196-209 are enriched in polar residues; that stretch reads PNSLSSEEPPTSED. The stretch at 304–355 forms a coiled coil; sequence KKQLSHDLTRLKEHYEKKMRDLMASTVGVVEIQQLRQKHELKMQKLVKAAKD. Residue Ser379 is modified to Phosphoserine. The DH domain maps to 421-608; sequence VRRYILGSVV…ETLAEKLNER (188 aa). Disordered regions lie at residues 1226 to 1260 and 1277 to 1297; these read KDKSRDSLAPGPEPQDEDQKDALPSGGAGSSLSQG and QKSDLSSSSGSLSLSHGSSSL. Residues 1279–1296 show a composition bias toward low complexity; sequence SDLSSSSGSLSLSHGSSS. At Ser1287 the chain carries Phosphoserine. At Gln1338 the chain carries N5-methylglutamine.

In terms of processing, methylated at Gln-1338 by N6AMT1.

May play a role in developmental myelination of peripheral nerves. The chain is Rho guanine nucleotide exchange factor 10 (ARHGEF10) from Homo sapiens (Human).